Here is a 391-residue protein sequence, read N- to C-terminus: Chalcone synthase (391 aa).

C164 is an active-site residue.

The protein belongs to the thiolase-like superfamily. Chalcone/stilbene synthases family.

The catalysed reaction is (E)-4-coumaroyl-CoA + 3 malonyl-CoA + 3 H(+) = 2',4,4',6'-tetrahydroxychalcone + 3 CO2 + 4 CoA. It functions in the pathway secondary metabolite biosynthesis; flavonoid biosynthesis. Functionally, the primary product of this enzyme is 4,2',4',6'-tetrahydroxychalcone (also termed naringenin-chalcone or chalcone) which can under specific conditions spontaneously isomerize into naringenin. The protein is Chalcone synthase (CHS) of Dianthus caryophyllus (Carnation).